The primary structure comprises 129 residues: MSLEYPEDLKYMDSHEYVRLEGEIATIGISAFAVDELGDIVFIEVPAEGEAIAQGETFGTIESVKAVADLYAPVSGTVIENNQAIVDAPEQLAGDPYGEGWLVKVRISDPSELTNALSASEYRAQVEGS.

In terms of domain architecture, Lipoyl-binding spans 24–106 (IATIGISAFA…YGEGWLVKVR (83 aa)). Position 65 is an N6-lipoyllysine (K65).

It belongs to the GcvH family. As to quaternary structure, the glycine cleavage system is composed of four proteins: P, T, L and H. Requires (R)-lipoate as cofactor.

In terms of biological role, the glycine cleavage system catalyzes the degradation of glycine. The H protein shuttles the methylamine group of glycine from the P protein to the T protein. The protein is Glycine cleavage system H protein of Cyanothece sp. (strain PCC 7425 / ATCC 29141).